The primary structure comprises 398 residues: Protein FAM53A (398 aa).

Positions 85–253 (QWQPQSPRPG…TSTPALGGRR (169 aa)) are disordered. Residues 103 to 115 (VDPSESTGSSTAP) are compositionally biased toward polar residues. Residues 123 to 132 (SLSEPEELVR) show a composition bias toward basic and acidic residues. Position 125 is a phosphoserine (serine 125). 2 stretches are compositionally biased toward low complexity: residues 176 to 193 (STGPTSPATPRPSSASGG) and 234 to 250 (TPLPWASSSPTSTPALG). The short motif at 268–276 (KRSRRKRRR) is the Nuclear localization signal element. Serine 301 and serine 304 each carry phosphoserine. Residues 336-398 (PGCSQRGLRT…ELDLEQIENN (63 aa)) form a disordered region. Over residues 363–375 (GSRRSSGDPRDGD) the composition is skewed to basic and acidic residues.

This sequence belongs to the FAM53 family.

The protein localises to the nucleus. In terms of biological role, may play an important role in neural development; the dorsomedial roof of the third ventricle. The polypeptide is Protein FAM53A (Homo sapiens (Human)).